Reading from the N-terminus, the 739-residue chain is MKKSTIPTLSALTLAMSLAFGGSVIAQEQVTDNQFWWPEQLNLSPLRQNAVESNPYGSDYHYAEAFKSLDLDAVKKDIKALMTESQDWWPADYGHYGPFFIRMAWHSAGVYRIFDGRGGAAGGQQRFEPLNSWPDNVNLDKARRLLWPIKQKYGSKISWGDLMVLTGNVALESMGFKTFGFAGGRVDDWEAEQVNWGSEKAWLDSKRRNEKGELAKPMGATQMGLIYVNPEGPNGVPDPLASAKEIRDTFGRMAMNDEETVALIAGGHTFGKAHGAHDPSKCVGADPAASGVEAQGLGWKNKCGKGHSEDTVTSGLEGAWSSNPTKWTMEYLTWLYTFDWVQTKSPAGHIQWTPADDKAANLVPDAHLPDKRHAPMMFTSDIALKEDPIYREITTRFLKNPQEFELAFAKAWFKLTHRDMGPKARYLGADVPAEMLIWQDPIPALDHPVIDNADIKALGNKILASGLTVPELVRTAWASASSFRGTDMRGGANGARIRLEPMMNWQANNPKELAKVLAKLEKVQKDFNGSLKGGKKVSLADVIVLGGSVAVEKAAKEAGVTVSVPFTPGRMDATQAQTDVSSFAVLEPTADGFRNYYSKDSSHSPAEMLIERANMLNLTVPEMTVLVGGLRALGANSAGVKHGVFTDKPGTLSNDFFVNLLDMSTKWSKSEKQEGIYEGQDRKSGKLKWTATPVDLVFGSHSELRAVSEVYGAQDGQDRFVQDFIKAWNKVMNADRFDI.

The signal sequence occupies residues Met-1–Ala-26. The segment at residues Trp-105–Tyr-227 is a cross-link (tryptophyl-tyrosyl-methioninium (Trp-Tyr) (with M-253)). His-106 (proton acceptor) is an active-site residue. The segment at residues Tyr-227–Met-253 is a cross-link (tryptophyl-tyrosyl-methioninium (Tyr-Met) (with W-105)). His-268 provides a ligand contact to heme b.

Belongs to the peroxidase family. Peroxidase/catalase subfamily. Homodimer or homotetramer. Requires heme b as cofactor. Formation of the three residue Trp-Tyr-Met cross-link is important for the catalase, but not the peroxidase activity of the enzyme.

It catalyses the reaction H2O2 + AH2 = A + 2 H2O. The enzyme catalyses 2 H2O2 = O2 + 2 H2O. In terms of biological role, bifunctional enzyme with both catalase and broad-spectrum peroxidase activity. This chain is Catalase-peroxidase 2, found in Shewanella sp. (strain MR-7).